The chain runs to 2850 residues: Mucin-6 (2850 aa).

Positions 1–22 (MLRVRQLLLLLLFRGPLIDAGA) are cleaved as a signal peptide. Residues 43–256 (GWCSTWGAGH…KLDDPNEICA (214 aa)) enclose the VWFD 1 domain. 2 disulfides stabilise this stretch: Cys-45–Cys-218 and Cys-67–Cys-255. Residue Asn-94 is glycosylated (N-linked (GlcNAc...) asparagine). The segment at 160 to 183 (HLTEGQGGDEVGTPGTLKQESKGS) is disordered. An N-linked (GlcNAc...) asparagine glycan is attached at Asn-310. The TIL 1 domain occupies 344 to 399 (CPANQVYQECGEVCIKTCSNPQHSCSSPCTFGCFCPHGTLLDDISGNQSCVPVNQC). The VWFD 2 domain maps to 437 to 621 (GHCSLEGGSF…ALEREMDPCS (185 aa)). Disulfide bonds link Cys-439/Cys-575 and Cys-461/Cys-620. N-linked (GlcNAc...) asparagine glycans are attached at residues Asn-528 and Asn-701. One can recognise a TIL 2 domain in the interval 806 to 869 (CPEPKTFQSC…DGQCVPAEEC (64 aa)). The 173-residue stretch at 908–1080 (STCVLYGEGH…NSWKESPLCG (173 aa)) folds into the VWFD 3 domain. 4 disulfide bridges follow: Cys-910-Cys-1044, Cys-932-Cys-1079, Cys-941-Cys-1041, and Cys-959-Cys-966. 2 N-linked (GlcNAc...) asparagine glycosylation sites follow: Asn-1017 and Asn-1221. Positions 1263–1281 (EFHSSTSANTPVAPSYLPG) are enriched in low complexity. Disordered regions lie at residues 1263–1363 (EFHS…TAEL), 1377–1400 (GMST…THRV), 1466–1504 (VSAN…PSTT), 1580–1600 (TPPV…RTTH), 1626–1650 (IASP…TSSV), 1705–1813 (TKTS…SLST), 1877–1942 (QTKS…RTTH), 1968–1992 (IASP…TSSV), 2049–2119 (TSFS…PSTT), 2219–2254 (QTKS…TTNS), 2276–2295 (IAHT…SSTT), 2306–2338 (EQST…SPTD), 2370–2473 (TTPP…FRTP), 2511–2621 (PTNP…TFVS), 2634–2674 (PTIH…KSTT), and 2692–2761 (STMG…GTCS). A compositionally biased stretch (polar residues) spans 1294–1312 (EELTVWTTPKESTVSSGEY). Residues 1345 to 1363 (TSKPTASSLSSSTKTTAEL) are compositionally biased toward low complexity. Polar residues-rich tracts occupy residues 1378–1399 (MSTS…TTHR) and 1466–1484 (VSAN…PVVH). Tandem repeats lie at residues 1440–1555 (TQNL…PTTE), 1556–1712 (GLNT…FSTD), 1713–1885 (RTST…FSTD), 1886–2054 (RTSA…FSTD), 2055–2227 (RTST…FSTD), 2228–2396 (RTST…FSTE), 2397–2563 (RTST…FPTT), and 2564–2671 (RTST…FSSK). Residues 1440–2671 (TQNLFSTAPH…VPTFSSFSSK (1232 aa)) form an approximate repeats region. The segment covering 1485-1504 (TTSGTSSSPQTPRTTHPSTT) has biased composition (low complexity). The segment covering 1626 to 1639 (IASPTPSAPQTSLA) has biased composition (polar residues). Positions 1705–1719 (TKTSFSTDRTSTSTS) are enriched in low complexity. Over residues 1720 to 1757 (APHLSETSAVTAHQSTPTAVSANSIKPTMSSTGTPVVH) the composition is skewed to polar residues. The segment covering 1758–1777 (TTSGTTSSPQTPRTTHPSTT) has biased composition (low complexity). The segment covering 1778 to 1813 (VAVSGTVHTTGLPSGTSVHTTTNFPTHSGPQSSLST) has biased composition (polar residues). The segment covering 1893 to 1942 (SQPSTVTPTQSTPIPATTNSLMTTGGLTGTPPVHTTSGTTSSPQTPRTTH) has biased composition (low complexity). Positions 1968 to 1981 (IASPTPSAPQTSLA) are enriched in polar residues. Low complexity predominate over residues 2049-2061 (TSFSTDRTSTSTS). Residues 2062–2099 (APHLSETSAVTAHQSTPTAVSANSIKPTMSSTGTPVVH) show a composition bias toward polar residues. Residues 2100-2119 (TTSGTTSSPQTPRTTHPSTT) are compositionally biased toward low complexity. Residues 2227 to 2238 (DRTSTPHLSQSS) are compositionally biased toward polar residues. Over residues 2282 to 2295 (TTHSLPTAASSSTT) the composition is skewed to low complexity. Low complexity predominate over residues 2370–2384 (TTPPNTSTPVTHSTS). Residues 2385 to 2429 (ATTEAQGSFSTERTSTSYLSHPSSTTVHQSTAGPVITSIKSTMGV) are compositionally biased toward polar residues. The span at 2436 to 2456 (HTTSGTTSSPQTPHSTHPIST) shows a compositional bias: low complexity. The span at 2457–2466 (AAISRTTGIS) shows a compositional bias: polar residues. A compositionally biased stretch (low complexity) spans 2516–2533 (SVSSASTSRPLSTSLPTT). The segment covering 2534–2560 (IKGTGTPQTPVSDINTTSATTQAHSSF) has biased composition (polar residues). The span at 2561-2584 (PTTRTSTSHLSLPSSMTSTLTPAS) shows a compositional bias: low complexity. Residues 2585–2601 (RSASTLQYTPTPSSVSH) are compositionally biased toward polar residues. Low complexity predominate over residues 2639-2674 (TPTPSSRPTSSTGLLSTSKTTSHVPTFSSFSSKSTT). Residues 2692 to 2725 (STMGMTNLPSSGSPDINHTTRPPGSSPLPTSAFL) are compositionally biased toward polar residues. Residues 2726–2759 (SRSTSPTGSSSPSTPVSSSNPDSSVSSPPSHPGT) show a composition bias toward low complexity. Intrachain disulfides connect Cys-2760-Cys-2807, Cys-2774-Cys-2821, Cys-2783-Cys-2841, and Cys-2787-Cys-2843. The region spanning 2760–2849 (CSLQEEEHQI…SCVCSPLQCK (90 aa)) is the CTCK domain.

Multimer; disulfide-linked. O-glycosylated. Expressed in stomach, duodenum and small intestine.

It is found in the secreted. May provide a mechanism for modulation of the composition of the protective mucus layer related to acid secretion or the presence of bacteria and noxious agents in the lumen. Plays an important role in the cytoprotection of epithelial surfaces and are used as tumor markers in a variety of cancers. May play a role in epithelial organogenesis. The chain is Mucin-6 (Muc6) from Mus musculus (Mouse).